The chain runs to 384 residues: NADP-dependent alcohol dehydrogenase 3 (384 aa).

Belongs to the iron-containing alcohol dehydrogenase family.

The catalysed reaction is a primary alcohol + NADP(+) = an aldehyde + NADPH + H(+). Functionally, has NADP-dependent alcohol dehydrogenase activity. The polypeptide is NADP-dependent alcohol dehydrogenase 3 (Entamoeba histolytica (strain ATCC 30459 / HM-1:IMSS / ABRM)).